A 1134-amino-acid polypeptide reads, in one-letter code: Myosin-4 (1134 aa).

Residues 110-160 (REKLCVWCRVAANGQWHLGKIHSTSSSDDVCVMLSANDDVRTMEEIFPANP) enclose the Myosin N-terminal SH3-like domain. The Myosin motor domain occupies 164–830 (EGVEDLTQLS…VISVLEERKK (667 aa)). Residues 255-262 (GESGAGKT) and 304-312 (NDNSSRFGK) each bind ATP. Actin-binding regions lie at residues 589 to 623 (LIEK…KQHL) and 710 to 732 (LFKL…KPNS). 3 consecutive IQ domains span residues 832–861 (VLRG…AAVI), 855–884 (MRNA…SAIV), and 891–920 (ELDA…KNKP). The disordered stretch occupies residues 913–939 (STQQKNKPRNEKKKTRRKSTKRVSEDK). Positions 918-933 (NKPRNEKKKTRRKSTK) are enriched in basic residues. A coiled-coil region spans residues 953–999 (LADLQSRVLKVEAAIMQKEDENTALQEELQRFEERWLENETRMKSME).

The protein belongs to the TRAFAC class myosin-kinesin ATPase superfamily. Myosin family. Plant myosin class VIII subfamily. Homodimer.

Functionally, myosin heavy chain that is required for the cell cycle-regulated transport of various organelles and proteins for their segregation. Functions by binding with its tail domain to receptor proteins on organelles and exerting force with its N-terminal motor domain against actin filaments, thereby transporting its cargo along polarized actin cables. This Arabidopsis thaliana (Mouse-ear cress) protein is Myosin-4 (VIII-B).